We begin with the raw amino-acid sequence, 64 residues long: Large ribosomal subunit protein bL35 (64 aa).

This sequence belongs to the bacterial ribosomal protein bL35 family.

The sequence is that of Large ribosomal subunit protein bL35 from Acinetobacter baylyi (strain ATCC 33305 / BD413 / ADP1).